The primary structure comprises 65 residues: Small ribosomal subunit protein bS21 (65 aa).

The interval 45–65 (GRLKRSRSKRRAQRANEERNS) is disordered. Over residues 48–57 (KRSRSKRRAQ) the composition is skewed to basic residues.

This sequence belongs to the bacterial ribosomal protein bS21 family.

This chain is Small ribosomal subunit protein bS21, found in Chlorobium luteolum (strain DSM 273 / BCRC 81028 / 2530) (Pelodictyon luteolum).